Here is a 548-residue protein sequence, read N- to C-terminus: Zinc metalloproteinase (548 aa).

The signal sequence occupies residues 1 to 28; it reads MKKYYAVTGIALAVGMLCTTQLAGATQA. Residue histidine 362 coordinates Zn(2+). Glutamate 363 is an active-site residue. Zn(2+) contacts are provided by histidine 366 and glutamate 386. The segment at 440–459 is disordered; it reads SNWKPTATNPNDNNDQGGVH. Positions 442–459 are enriched in polar residues; that stretch reads WKPTATNPNDNNDQGGVH. Histidine 459 functions as the Proton donor in the catalytic mechanism.

This sequence belongs to the peptidase M4 family. The cofactor is Ca(2+). Zn(2+) is required as a cofactor.

The protein resides in the secreted. It is found in the cell wall. Functionally, zinc metalloprotease with hemolytic properties. In Renibacterium salmoninarum, this protein is Zinc metalloproteinase (hly).